A 96-amino-acid polypeptide reads, in one-letter code: Large ribosomal subunit protein bL28 (96 aa).

Residues 1-22 (MSRSCELTGKGVQSGNNVSHAN) show a composition bias toward polar residues. Residues 1-24 (MSRSCELTGKGVQSGNNVSHANNK) are disordered.

The protein belongs to the bacterial ribosomal protein bL28 family.

This chain is Large ribosomal subunit protein bL28, found in Rhizobium meliloti (strain 1021) (Ensifer meliloti).